Consider the following 69-residue polypeptide: Ubiquitin-ribosomal protein eL40 fusion protein (69 aa).

A Ubiquitin-like domain is found at 1 to 17 (NIQKESTLHLVLRLRGG). Residue K4 forms a Glycyl lysine isopeptide (Lys-Gly) (interchain with G-Cter in ubiquitin) linkage. G17 participates in a covalent cross-link: Glycyl lysine isopeptide (Gly-Lys) (interchain with K-? in acceptor proteins). K39 carries the N6,N6,N6-trimethyllysine modification.

In the N-terminal section; belongs to the ubiquitin family. The protein in the C-terminal section; belongs to the eukaryotic ribosomal protein eL40 family. In terms of assembly, part of the 60S ribosomal subunit. Post-translationally, trimethylation of Lys-39 ('Lys-22' of the mature chain) by SMYD5 promotes translation elongation and protein synthesis.

Its subcellular location is the cytoplasm. The protein localises to the nucleus. In terms of biological role, exists either covalently attached to another protein, or free (unanchored). When covalently bound, it is conjugated to target proteins via an isopeptide bond either as a monomer (monoubiquitin), a polymer linked via different Lys residues of the ubiquitin (polyubiquitin chains) or a linear polymer linked via the initiator Met of the ubiquitin (linear polyubiquitin chains). Polyubiquitin chains, when attached to a target protein, have different functions depending on the Lys residue of the ubiquitin that is linked: Lys-6-linked may be involved in DNA repair; Lys-11-linked is involved in ERAD (endoplasmic reticulum-associated degradation) and in cell-cycle regulation; Lys-29-linked is involved in proteotoxic stress response and cell cycle; Lys-33-linked is involved in kinase modification; Lys-48-linked is involved in protein degradation via the proteasome; Lys-63-linked is involved in endocytosis, DNA-damage responses as well as in signaling processes leading to activation of the transcription factor NF-kappa-B. Linear polymer chains formed via attachment by the initiator Met lead to cell signaling. Ubiquitin is usually conjugated to Lys residues of target proteins, however, in rare cases, conjugation to Cys or Ser residues has been observed. When polyubiquitin is free (unanchored-polyubiquitin), it also has distinct roles, such as in activation of protein kinases, and in signaling. Its function is as follows. Component of the 60S subunit of the ribosome. This Gallus gallus (Chicken) protein is Ubiquitin-ribosomal protein eL40 fusion protein (UBA52).